Here is a 185-residue protein sequence, read N- to C-terminus: Prenylated Rab acceptor protein 1 (185 aa).

Topologically, residues 1-78 are cytoplasmic; sequence MAAQKDQQKD…RNVEYYQSNY (78 aa). The tract at residues 30-54 is required for interaction with prenylated RAB3A and VAMP2; it reads AGREWLERRRATIRPWGSFVDQRRF. The next 2 membrane-spanning stretches (helical) occupy residues 79 to 94 and 95 to 112; these read VFVFLGLILYCVVTSP and MLLVALAVFFGACYILYL. At 113 to 131 the chain is on the cytoplasmic side; that stretch reads RTLQSKFVLFGREVSPAHQ. Helical transmembrane passes span 132–148 and 149–165; these read YALAGGVSFPFFWLAGA and GSAVFWVLGATLVVIGS. A required for interaction with GDI1 region spans residues 165–185; that stretch reads SHAAFHQIEAVDGEELQMEPV. Residues 166-185 lie on the Cytoplasmic side of the membrane; the sequence is HAAFHQIEAVDGEELQMEPV. Residues 175-185 are required for interaction with prenylated RAB3A and VAMP2; it reads VDGEELQMEPV. The interval 175-185 is homodimerization; the sequence is VDGEELQMEPV.

Belongs to the PRA1 family. As to quaternary structure, homodimer. Interacts with VAMP2 (synaptobrevin-2), prenylated Rab proteins, GDI1, NRDG1 and PCLO.

It is found in the cell membrane. Its subcellular location is the cytoplasm. The protein resides in the golgi apparatus. It localises to the cytoplasmic vesicle. The protein localises to the secretory vesicle. It is found in the synaptic vesicle. Functionally, general Rab protein regulator required for vesicle formation from the Golgi complex. May control vesicle docking and fusion by mediating the action of Rab GTPases to the SNARE complexes. In addition it inhibits the removal of Rab GTPases from the membrane by GDI1. This chain is Prenylated Rab acceptor protein 1 (RABAC1), found in Sus scrofa (Pig).